The following is a 180-amino-acid chain: WPP domain-containing protein 2 (180 aa).

The segment covering 1–26 has biased composition (low complexity); the sequence is MAETAETINTTISSPPPESESSTTIS. Disordered stretches follow at residues 1–61 and 140–180; these read MAET…LRIW and SVKA…KSEA. A compositionally biased stretch (polar residues) spans 27–36; sequence AMTDPTSQEA. Basic and acidic residues predominate over residues 37–53; the sequence is ASKDTDLTKEAESEKKP. The segment at 44–147 is WPP; that stretch reads TKEAESEKKP…LESVKARSNA (104 aa). At Ser173 the chain carries Phosphoserine.

In terms of assembly, binds to FPP proteins. Interacts with WAP, WIP1, WIP2 and WIP3 through its WPP domain. Interacts with WIT1 and HSP70-1. As to expression, expressed in roots, stems, leaves and flowers.

The protein resides in the nucleus envelope. It localises to the cytoplasm. It is found in the nucleus. Its subcellular location is the golgi apparatus. Functionally, regulates the mitotic activity in roots. Plays a role with HSP70-1 in facilitating WIT1 nuclear envelope targeting. This is WPP domain-containing protein 2 (WPP2) from Arabidopsis thaliana (Mouse-ear cress).